The chain runs to 804 residues: ABC transporter aclQ (804 aa).

Helical transmembrane passes span 3–23, 52–72, 97–117, 119–139, 155–175, 206–226, 239–259, 349–369, and 373–393; these read LAVL…ISYL, FTAI…SITI, IAVF…PFSP, LSHS…LAMF, LQLG…ALYF, HGGW…LWPS, FVLL…LGIV, LVFQ…YFLI, and AFYS…TIYM. In terms of domain architecture, ABC transmembrane type-1 spans 236-518; it reads IFCFVLLVIQ…FGSFYTQVQN (283 aa). An N-linked (GlcNAc...) asparagine glycan is attached at asparagine 460. Helical transmembrane passes span 464-484 and 489-509; these read NLLF…QISA and VAMF…LNFF. The ABC transporter domain occupies 552–786; the sequence is VEFTHVNFAY…NGMYSQMWAK (235 aa). Position 585–592 (585–592) interacts with ATP; it reads GESGSGKS. N-linked (GlcNAc...) asparagine glycans are attached at residues asparagine 639 and asparagine 797.

Belongs to the ABC transporter superfamily. ABCB family. Heavy Metal importer (TC 3.A.1.210) subfamily.

It localises to the membrane. Its function is as follows. ABC transporter; part of the gene cluster that mediates the biosynthesis of aspirochlorine (or antibiotic A30641), an unusual halogenated spiro compound with distinctive antifungal properties due to selective inhibition of protein biosynthesis, and which is also active against bacteria, viruses, and murine tumor cells. The sequence is that of ABC transporter aclQ from Aspergillus oryzae (strain ATCC 42149 / RIB 40) (Yellow koji mold).